A 140-amino-acid polypeptide reads, in one-letter code: NADH-quinone oxidoreductase subunit I (140 aa).

2 4Fe-4S ferredoxin-type domains span residues 42–71 (GSFT…VGSI) and 81–110 (ASYE…FNQE). Cysteine 51, cysteine 54, cysteine 57, cysteine 61, cysteine 90, cysteine 93, cysteine 96, and cysteine 100 together coordinate [4Fe-4S] cluster.

It belongs to the complex I 23 kDa subunit family. In terms of assembly, NDH-1 is composed of 14 different subunits. Subunits NuoA, H, J, K, L, M, N constitute the membrane sector of the complex. [4Fe-4S] cluster is required as a cofactor.

The protein resides in the cell membrane. The catalysed reaction is a quinone + NADH + 5 H(+)(in) = a quinol + NAD(+) + 4 H(+)(out). Its function is as follows. NDH-1 shuttles electrons from NADH, via FMN and iron-sulfur (Fe-S) centers, to quinones in the respiratory chain. The immediate electron acceptor for the enzyme in this species is believed to be ubiquinone. Couples the redox reaction to proton translocation (for every two electrons transferred, four hydrogen ions are translocated across the cytoplasmic membrane), and thus conserves the redox energy in a proton gradient. This chain is NADH-quinone oxidoreductase subunit I, found in Carboxydothermus hydrogenoformans (strain ATCC BAA-161 / DSM 6008 / Z-2901).